Here is a 435-residue protein sequence, read N- to C-terminus: E3 ubiquitin-protein ligase RING1 (435 aa).

Residues 46–86 (CPICLDMLKKTMTTKECLHRFCSDCIVTALRSGNKECPTCR) form an RING-type zinc finger. Residues 144–322 (KLQSQNRPQR…TEGEGNGELG (179 aa)) form a disordered region. Gly residues predominate over residues 157–170 (KGGGGGGGGGGNGN). Composition is skewed to low complexity over residues 171–188 (GAAN…TAVG), 202–211 (SNDSNSNTNS), 222–251 (SGTS…TSAT), and 259–278 (SNPP…SSSS). Residue serine 202 is modified to Phosphoserine. Serine 266 is modified (phosphoserine). At threonine 267 the chain carries Phosphothreonine. Position 269 is a phosphoserine (serine 269). Residues 309–322 (SNIDTEGEGNGELG) show a composition bias toward acidic residues.

Interacts with ORD. Component of PRC1 complex, which contains many PcG proteins like Pc, ph, Scm, Psc, Sce and also chromatin remodeling proteins such as histone deacetylases. This complex is distinct from the Esc/E(z) complex, at least composed of esc, E(z), Su(z)12, HDAC1/Rpd3 and Caf1-55. The two complexes however cooperate and interact together during the first 3 hours of development to establish PcG silencing. As to expression, ubiquitously expressed in syncytial blastoderm embryos. Ubiquitously expressed until stage 11. Then, it is only expressed in the neuroectoderm. Later in embryonic development, it is only expressed in the CNS. In larvae, it is expressed in all imaginal disks. Expressed in the male and female gonads.

It localises to the nucleus. The protein resides in the chromosome. It catalyses the reaction S-ubiquitinyl-[E2 ubiquitin-conjugating enzyme]-L-cysteine + [acceptor protein]-L-lysine = [E2 ubiquitin-conjugating enzyme]-L-cysteine + N(6)-ubiquitinyl-[acceptor protein]-L-lysine.. Its pathway is protein modification; protein ubiquitination. E3 ubiquitin-protein ligase that mediates monoubiquitination of 'Lys-118' of histone H2A, thereby playing a central role in histone code and gene regulation. H2A 'Lys-118' ubiquitination gives a specific tag for epigenetic transcriptional repression. Polycomb group (PcG) protein. PcG proteins act by forming multiprotein complexes, which are required to maintain the transcriptionally repressive state of homeotic genes throughout development. PcG proteins are not required to initiate repression, but to maintain it during later stages of development. PcG complexes act via modification of histones, such as methylation, deacetylation, ubiquitination rendering chromatin heritably changed in its expressibility. May play a role in meiotic sister chromatid cohesion. In Drosophila melanogaster (Fruit fly), this protein is E3 ubiquitin-protein ligase RING1 (Sce).